The following is a 55-amino-acid chain: ATP synthase protein 8 (55 aa).

Residues 4 to 24 (LNPNPWFTILIFTWAVFLTIL) form a helical membrane-spanning segment.

This sequence belongs to the ATPase protein 8 family. F-type ATPases have 2 components, CF(1) - the catalytic core - and CF(0) - the membrane proton channel.

The protein resides in the mitochondrion membrane. Functionally, mitochondrial membrane ATP synthase (F(1)F(0) ATP synthase or Complex V) produces ATP from ADP in the presence of a proton gradient across the membrane which is generated by electron transport complexes of the respiratory chain. F-type ATPases consist of two structural domains, F(1) - containing the extramembraneous catalytic core and F(0) - containing the membrane proton channel, linked together by a central stalk and a peripheral stalk. During catalysis, ATP synthesis in the catalytic domain of F(1) is coupled via a rotary mechanism of the central stalk subunits to proton translocation. Part of the complex F(0) domain. Minor subunit located with subunit a in the membrane. The polypeptide is ATP synthase protein 8 (mt-atp8) (Polypterus ornatipinnis (Ornate bichir)).